A 431-amino-acid polypeptide reads, in one-letter code: Glutamate-1-semialdehyde 2,1-aminomutase (431 aa).

An N6-(pyridoxal phosphate)lysine modification is found at K269.

Belongs to the class-III pyridoxal-phosphate-dependent aminotransferase family. HemL subfamily. In terms of assembly, homodimer. The cofactor is pyridoxal 5'-phosphate.

It is found in the cytoplasm. It carries out the reaction (S)-4-amino-5-oxopentanoate = 5-aminolevulinate. Its pathway is porphyrin-containing compound metabolism; protoporphyrin-IX biosynthesis; 5-aminolevulinate from L-glutamyl-tRNA(Glu): step 2/2. The protein operates within porphyrin-containing compound metabolism; chlorophyll biosynthesis. The polypeptide is Glutamate-1-semialdehyde 2,1-aminomutase (Chlorobium limicola (strain DSM 245 / NBRC 103803 / 6330)).